The following is a 445-amino-acid chain: tRNA(Ile)-lysidine synthase (445 aa).

Residue 38–43 participates in ATP binding; that stretch reads SGGLDS.

Belongs to the tRNA(Ile)-lysidine synthase family.

It localises to the cytoplasm. The catalysed reaction is cytidine(34) in tRNA(Ile2) + L-lysine + ATP = lysidine(34) in tRNA(Ile2) + AMP + diphosphate + H(+). Ligates lysine onto the cytidine present at position 34 of the AUA codon-specific tRNA(Ile) that contains the anticodon CAU, in an ATP-dependent manner. Cytidine is converted to lysidine, thus changing the amino acid specificity of the tRNA from methionine to isoleucine. This Neisseria gonorrhoeae (strain ATCC 700825 / FA 1090) protein is tRNA(Ile)-lysidine synthase.